The chain runs to 908 residues: Low affinity vacuolar monovalent cation/H(+) antiporter (908 aa).

The span at 1 to 15 shows a compositional bias: polar residues; that stretch reads MAKNNHISASGNSTS. The segment at 1-20 is disordered; it reads MAKNNHISASGNSTSGDHRL. Residues 1-244 lie on the Cytoplasmic side of the membrane; it reads MAKNNHISAS…WEVTCSNVLW (244 aa). The residue at position 26 (Thr26) is a Phosphothreonine. Ser32 carries the post-translational modification Phosphoserine. Thr33 is subject to Phosphothreonine. The tract at residues 68–147 is disordered; the sequence is NKSKRSVSSQ…DDEDANDDSR (80 aa). Over residues 73 to 87 the composition is skewed to low complexity; sequence SVSSQSPIVHSSNNT. Positions 102-121 are enriched in polar residues; sequence ESLSSKSHSVPDLNTATPSS. At Ser110 the chain carries Phosphoserine. Thr118 carries the phosphothreonine modification. Ser121 is modified (phosphoserine). The chain crosses the membrane as a helical span at residues 245–265; sequence FILFGFPIAILFYSAAIVVFL. Topologically, residues 266 to 408 are vacuolar; that stretch reads LGGGGLVTNS…GRVLFYTIFH (143 aa). N-linked (GlcNAc...) asparagine glycosylation is present at Asn361. The helical transmembrane segment at 409–429 threads the bilayer; that stretch reads LVLQPILAVLSLCLWLLVFTI. The Cytoplasmic segment spans residues 430 to 494; it reads PMSNVLWQIM…HYYKYTVDGT (65 aa). Residues 495–515 traverse the membrane as a helical segment; it reads NVIVVNLISIVFFTIFDFYVL. Residues 516–530 are Vacuolar-facing; it reads KNFLHWKTWFTYESS. A helical transmembrane segment spans residues 531 to 551; sequence IFILCLTSTIPLAFYIGQAVA. The Cytoplasmic segment spans residues 552–560; the sequence is SISAQTSMG. The helical transmembrane segment at 561-581 threads the bilayer; that stretch reads VGAVINAFFSTIVEIFLYCVA. The Vacuolar segment spans residues 582 to 587; it reads LQQKKG. The helical transmembrane segment at 588 to 608 threads the bilayer; the sequence is LLVEGSMIGSILGAVLLLPGL. Residues 609–626 lie on the Cytoplasmic side of the membrane; sequence SMCGGALNRKTQRYNPAS. The helical transmembrane segment at 627 to 647 threads the bilayer; that stretch reads AGVSSALLIFSMIVMFVPTVL. Over 648–686 the chain is Vacuolar; it reads YEIYGGYSVNCADGANDRDCTFSHPPLKFNRLFTHVIQP. The helical transmembrane segment at 687 to 707 threads the bilayer; the sequence is MSISCAIVLFCAYIIGLWFTL. Topologically, residues 708–746 are cytoplasmic; that stretch reads RTHAKMIWQLPIADPTSTAPEQQEQNSHDAPNWSRSKST. A helical membrane pass occupies residues 747–767; the sequence is CILLMSTLLYAIIAEILVSCV. Topologically, residues 768 to 783 are vacuolar; that stretch reads DAVLEDIPSLNPKFLG. The helical transmembrane segment at 784–804 threads the bilayer; it reads LTIFALIPNTTEFLNAISFAI. The Cytoplasmic portion of the chain corresponds to 805–816; the sequence is HGNVALSMEIGS. The chain crosses the membrane as a helical span at residues 817-837; that stretch reads AYALQVCLLQIPSLVIYSIFY. At 838–851 the chain is on the vacuolar side; sequence TWNVKKSMINIRTQ. Residues 852 to 872 form a helical membrane-spanning segment; it reads MFPLVFPRWDIFGAMTSVFMF. Residues 873 to 885 lie on the Cytoplasmic side of the membrane; it reads TYLYAEGKSNYFK. A helical transmembrane segment spans residues 886–906; it reads GSMLILLYIIIVVGFYFQGAL. Over 907 to 908 the chain is Vacuolar; the sequence is SE.

The protein belongs to the Ca(2+):cation antiporter (CaCA) (TC 2.A.19) family.

It is found in the vacuole membrane. In terms of biological role, has a role in promoting intracellular monovalent cation sequestration via the exchange of monovalent cations and especially Na(+) for hydrogen ions across the vacuolar membrane. This chain is Low affinity vacuolar monovalent cation/H(+) antiporter (VNX1), found in Saccharomyces cerevisiae (strain ATCC 204508 / S288c) (Baker's yeast).